Here is a 194-residue protein sequence, read N- to C-terminus: Imidazoleglycerol-phosphate dehydratase (194 aa).

Belongs to the imidazoleglycerol-phosphate dehydratase family.

The protein localises to the cytoplasm. It catalyses the reaction D-erythro-1-(imidazol-4-yl)glycerol 3-phosphate = 3-(imidazol-4-yl)-2-oxopropyl phosphate + H2O. Its pathway is amino-acid biosynthesis; L-histidine biosynthesis; L-histidine from 5-phospho-alpha-D-ribose 1-diphosphate: step 6/9. The protein is Imidazoleglycerol-phosphate dehydratase of Streptococcus thermophilus (strain ATCC BAA-491 / LMD-9).